Reading from the N-terminus, the 761-residue chain is Ribonucleoside-diphosphate reductase 1 subunit alpha (761 aa).

One can recognise an ATP-cone domain in the interval 5–95; sequence LLVTKRDGST…IFHLRKKAYG (91 aa). ATP is bound by residues lysine 9, 15 to 21, threonine 55, and lysine 91; that span reads ERINLDK. Threonine 209 contacts GDP. Cysteine 225 and cysteine 462 are oxidised to a cystine. Residues 232-234, arginine 262, and arginine 269 contribute to the dTTP site; that span reads DSL. Position 283 is an N6-acetyllysine (lysine 283). Position 437 (asparagine 437) interacts with GDP. Asparagine 437 acts as the Proton acceptor in catalysis. Cysteine 439 serves as the catalytic Cysteine radical intermediate. GDP-binding positions include glutamate 441 and 623 to 625; that span reads ETS. Glutamate 441 functions as the Proton acceptor in the catalytic mechanism.

This sequence belongs to the ribonucleoside diphosphate reductase large chain family. As to quaternary structure, tetramer of two alpha (R1) and two beta (R2) subunits. The B1 protein is a dimer of alpha subunits. A radical transfer pathway occurs between 'Tyr-122' of R2 and R1. Binding of the substrate occurs primarily when the active-site cysteines are reduced.

It catalyses the reaction a 2'-deoxyribonucleoside 5'-diphosphate + [thioredoxin]-disulfide + H2O = a ribonucleoside 5'-diphosphate + [thioredoxin]-dithiol. Under complex allosteric control mediated by deoxynucleoside triphosphates and ATP binding to separate specificity and activation sites on the alpha subunit. The type of nucleotide bound at the specificity site determines substrate preference. It seems probable that ATP makes the enzyme reduce CDP and UDP, dGTP favors ADP reduction and dTTP favors GDP reduction. Stimulated by ATP and inhibited by dATP binding to the activity site. In vitro, its activity is increased by dithiothreitol (DTT) or thioredoxins (non-specific). Inhibited by hydroxyurea, leads to dNTP depletion, replication fork arrest and genomic instability. Functionally, provides the precursors necessary for DNA synthesis. Catalyzes the biosynthesis of deoxyribonucleotides from the corresponding ribonucleotides. R1 contains the binding sites for both substrates and allosteric effectors and carries out the actual reduction of the ribonucleotide. It also provides redox-active cysteines. The sequence is that of Ribonucleoside-diphosphate reductase 1 subunit alpha (nrdA) from Escherichia coli (strain K12).